The following is a 189-amino-acid chain: Haloacid dehalogenase-like hydrolase domain-containing protein 3 (189 aa).

Belongs to the HAD-like hydrolase superfamily.

The protein is Haloacid dehalogenase-like hydrolase domain-containing protein 3 (hdhd3) of Xenopus tropicalis (Western clawed frog).